Reading from the N-terminus, the 1002-residue chain is Ephrin type-B receptor 5 (1002 aa).

The signal sequence occupies residues 1–29 (MDSNADISARRVSGMDWLWLVCFFHLVTS). Topologically, residues 30–564 (LEEILLDTTG…AQDRLPLIVG (535 aa)) are extracellular. One can recognise an Eph LBD domain in the interval 31–213 (EEILLDTTGE…FFYKCPAVVK (183 aa)). Fibronectin type-III domains are found at residues 344 to 452 (APRD…TSQS) and 453 to 548 (VPSA…TLMA). Asparagine 446 carries an N-linked (GlcNAc...) asparagine glycan. Residues 565 to 585 (SALGGLAFLVIAAIAILAIIF) traverse the membrane as a helical segment. Residues 586–1002 (KSKRRETPYT…HLNQLEPVEV (417 aa)) are Cytoplasmic-facing. In terms of domain architecture, Protein kinase spans 637–900 (IKIEEVIGSG…QIVSALDKMI (264 aa)). ATP-binding positions include 643–651 (IGSGEFGEV) and lysine 669. Aspartate 762 acts as the Proton acceptor in catalysis. Residues 906–928 (LKATGTGSSRPSQPLLSNSPPDF) form a disordered region. Polar residues predominate over residues 910–928 (GTGSSRPSQPLLSNSPPDF). Residues 929–993 (PSLSNAHEWL…LNSIQLMKVH (65 aa)) form the SAM domain. The short motif at 1000 to 1002 (VEV) is the PDZ-binding element.

It belongs to the protein kinase superfamily. Tyr protein kinase family. Ephrin receptor subfamily. As to expression, most abundant in thymus and detectable in brain, retina, kidney, lung and heart. Not detected in skeletal muscle and liver.

It localises to the membrane. The catalysed reaction is L-tyrosyl-[protein] + ATP = O-phospho-L-tyrosyl-[protein] + ADP + H(+). Functionally, receptor for members of the ephrin-B family. This chain is Ephrin type-B receptor 5 (EPHB5), found in Gallus gallus (Chicken).